Reading from the N-terminus, the 110-residue chain is UPF0122 protein STER_0914 (110 aa).

It belongs to the UPF0122 family.

Functionally, might take part in the signal recognition particle (SRP) pathway. This is inferred from the conservation of its genetic proximity to ftsY/ffh. May be a regulatory protein. The protein is UPF0122 protein STER_0914 of Streptococcus thermophilus (strain ATCC BAA-491 / LMD-9).